The sequence spans 292 residues: uncharacterized protein (292 aa).

Transmembrane regions (helical) follow at residues 17–37 (LFYT…FPAL), 135–155 (LIAV…IGQL), 166–186 (TTLW…YDIV), and 216–236 (FHGV…TALY). A disordered region spans residues 267 to 292 (EKSEDKKSIVTSRIEEENEDEISDYE). Over residues 282–292 (EENEDEISDYE) the composition is skewed to acidic residues.

It localises to the membrane. This is an uncharacterized protein from Caenorhabditis elegans.